Reading from the N-terminus, the 234-residue chain is HTH-type transcriptional regulator ArcR (234 aa).

Residue 40–129 (VRHYTKGQVI…MAFLCKANDD (90 aa)) coordinates a nucleoside 3',5'-cyclic phosphate. In terms of domain architecture, HTH crp-type spans 155–228 (KFAKDRIIKL…HKNWLVSKHL (74 aa)). The segment at residues 188–207 (IQLMSDMAGISRETAGHIIH) is a DNA-binding region (H-T-H motif).

Its subcellular location is the cytoplasm. Positively regulates the expression of the arcABDCR operon under anaerobic conditions, thus playing an essential role in arginine catabolism. May also control the expression of genes encoding proteins which are involved in anaerobic metabolism. Can bind cyclic AMP. The sequence is that of HTH-type transcriptional regulator ArcR (arcR) from Staphylococcus aureus (strain Mu50 / ATCC 700699).